The chain runs to 490 residues: tRNA-guanine(15) transglycosylase (490 aa).

D92 (nucleophile) is an active-site residue. D127 and A195 together coordinate substrate. Residues C278, C280, and C283 each contribute to the Zn(2+) site.

Belongs to the archaeosine tRNA-ribosyltransferase family. It depends on Zn(2+) as a cofactor.

The enzyme catalyses guanosine(15) in tRNA + 7-cyano-7-deazaguanine = 7-cyano-7-carbaguanosine(15) in tRNA + guanine. Its pathway is tRNA modification; archaeosine-tRNA biosynthesis. Exchanges the guanine residue with 7-cyano-7-deazaguanine (preQ0) at position 15 in the dihydrouridine loop (D-loop) of archaeal tRNAs. In Haloarcula marismortui (strain ATCC 43049 / DSM 3752 / JCM 8966 / VKM B-1809) (Halobacterium marismortui), this protein is tRNA-guanine(15) transglycosylase.